A 269-amino-acid polypeptide reads, in one-letter code: Tryptophan synthase alpha chain (269 aa).

Active-site proton acceptor residues include E49 and D60.

Belongs to the TrpA family. Tetramer of two alpha and two beta chains.

It catalyses the reaction (1S,2R)-1-C-(indol-3-yl)glycerol 3-phosphate + L-serine = D-glyceraldehyde 3-phosphate + L-tryptophan + H2O. The protein operates within amino-acid biosynthesis; L-tryptophan biosynthesis; L-tryptophan from chorismate: step 5/5. In terms of biological role, the alpha subunit is responsible for the aldol cleavage of indoleglycerol phosphate to indole and glyceraldehyde 3-phosphate. This is Tryptophan synthase alpha chain from Paramagnetospirillum magneticum (strain ATCC 700264 / AMB-1) (Magnetospirillum magneticum).